Consider the following 1401-residue polypeptide: Bifunctional 3'-5' exonuclease/ATP-dependent helicase WRN (1401 aa).

The segment at 1-271 (METTSLQRKF…FPVTCRNLET (271 aa)) is interaction with WRNIP1. The KBM 1 signature appears at 6-18 (LQRKFPEWMSMQS). The 173-residue stretch at 51–223 (YEASDCSFLS…GLIIYQKLGN (173 aa)) folds into the 3'-5' exonuclease domain. The Zn(2+) site is built by Asp76 and Glu78. Lys148 is covalently cross-linked (Glycyl lysine isopeptide (Lys-Gly) (interchain with G-Cter in SUMO2)). Asp210 lines the Zn(2+) pocket. Residues Lys235 and Lys246 each participate in a glycyl lysine isopeptide (Lys-Gly) (interchain with G-Cter in SUMO2) cross-link. Residues 401–427 (QAKEEKYNDVSHQLSEHLSPNDDENDS) are disordered. Residues Ser419, Ser433, and Ser444 each carry the phosphoserine modification. Residues 464–492 (GTNGRLPPEEEDGHGNEAIKEEQEEEDHL) form a disordered region. In terms of domain architecture, Helicase ATP-binding spans 522–688 (HSVLEERRDN…ISCLNLKDPQ (167 aa)). 535–542 (MATGYGKS) is a binding site for ATP. The DEAH box signature appears at 632 to 635 (DEAH). In terms of domain architecture, Helicase C-terminal spans 713–866 (DLKPFLVRKA…KLKMMVKMEK (154 aa)). Cys873, Cys900, Cys901, and Cys904 together coordinate Zn(2+). Residues 952 to 958 (RGSNSQR) are interaction with DNA. Positions 1041–1106 (LLPSSNPVSP…PSPGTSSSPL (66 aa)) are disordered. Positions 1043–1069 (PSSNPVSPETTQHSSNQNPAGLTTKQS) are enriched in polar residues. Residues 1070 to 1081 (NLERTHSYKVPE) show a composition bias toward basic and acidic residues. Position 1098 is a phosphoserine (Ser1098). The 80-residue stretch at 1115–1194 (LDARTGLYAR…KHFCQVTSVQ (80 aa)) folds into the HRDC domain. Residues 1323-1332 (GSDSRTQPPC) are compositionally biased toward polar residues. The segment at 1323–1401 (GSDSRTQPPC…AKTKKKGLFS (79 aa)) is disordered. Over residues 1348 to 1358 (ESCKESKEAVT) the composition is skewed to basic and acidic residues. A Phosphoserine modification is found at Ser1364. Positions 1367 to 1376 (SKRKLPEWFA) match the KBM 2 motif. Residues 1382 to 1392 (SADTGSSSSMA) show a composition bias toward polar residues. Residues 1388 to 1401 (SSSMAKTKKKGLFS) carry the XLM motif.

Belongs to the helicase family. RecQ subfamily. As to quaternary structure, monomer, and homooligomer. May exist as homodimer, homotrimer, homotetramer and/or homohexamer. Homotetramer, or homohexamer, when bound to DNA. Interacts via its N-terminal domain with WRNIP1. Interacts with EXO1, PCNA and SUPV3L1. Interacts with PML (isoform PML-4). Interacts (via KBM motif) with XRCC5 and XRCC6; promoting recruitment to DNA damage sites. Interacts with RECQL5; this interaction stimulates WRN helicase activity on DNA fork duplexes. Requires Zn(2+) as cofactor. It depends on Mn(2+) as a cofactor. Phosphorylated by PRKDC. Expressed ubiquitously in most organs at a low level, highly expressed in testis, ovary and spleen.

Its subcellular location is the nucleus. The protein localises to the nucleolus. It is found in the nucleoplasm. It localises to the chromosome. It carries out the reaction Couples ATP hydrolysis with the unwinding of duplex DNA by translocating in the 3'-5' direction.. The catalysed reaction is ATP + H2O = ADP + phosphate + H(+). With respect to regulation, zinc ions stimulate the exonuclease activity. Its function is as follows. Multifunctional enzyme that has magnesium and ATP-dependent 3'-5' DNA-helicase activity. Has 3'-&gt;5' exonuclease activity on forked dsDNA. Has no nuclease activity towards single-stranded DNA or blunt-ended double-stranded DNA. Binds preferentially to DNA substrates containing alternate secondary structures, such as replication forks and Holliday junctions. May play an important role in the dissociation of joint DNA molecules that can arise as products of homologous recombination, at stalled replication forks or during DNA repair. Alleviates stalling of DNA polymerases at the site of DNA lesions. Unwinds some G-quadruplex DNA. Plays a role in the formation of DNA replication focal centers; stably associates with foci elements generating binding sites for RP-A. Plays a role in double-strand break repair after gamma-irradiation. This chain is Bifunctional 3'-5' exonuclease/ATP-dependent helicase WRN (Wrn), found in Mus musculus (Mouse).